The primary structure comprises 106 residues: Programmed cell death activator egl-1 (106 aa).

Residues 73–81 (LAAMCDDFD) form a BH3-like region.

Interacts with ced-9; the interaction results in ced-4 release from the ced-4/ced-9 complex. Interaction with ced-9 may enhance interaction of ced-9 with drp-1, but not with ced-4. A ced-9/egl-1 complex may recruit drp-1 to the mitochondrial surface.

It localises to the synapse. Functionally, plays a major role in programmed cell death (PCD or apoptosis) by negatively regulating ced-9. Binds to and directly inhibits the activity of ced-9, releasing the cell death activator ced-4 from a ced-9/ced-4 containing protein complex and allowing ced-4 to activate the cell-killing caspase ced-3. Required to activate programmed cell death in the sister cells of the serotonergic neurosecretory motor (NSM) neurons during embryogenesis. Required to activate programmed cell death in the sister cells of the M4 motor neuron and I1 pharyngeal neuron during embryogenesis. During larval development, required for the elimination of transient presynaptic components upstream of ced-9, ced-4 and ced-3 apoptotic pathway. Together with ain-1, a component of the miRNA-induced-silencing complex (miRISC), and probably upstream of ced-3 and ced-4, regulates temporal cell fate patterning during larval development. Has been shown in two studies to be dispensable in mitochondrial dynamics and morphology during early embryonic development. However, one study shows that during larval development, egl-1 is involved in modulating mitochondrial dynamics, perhaps acting by stabilizing the interaction between ced-9 and drp-1 in order to promote mitochondrial fission. Involved in inducing mitochondrial fragmentation during apoptosis, probably acting via ced-9 and dynamin-related protein drp-1. In Caenorhabditis elegans, this protein is Programmed cell death activator egl-1.